The chain runs to 461 residues: mRNA cap guanine-N(7) methyltransferase (461 aa).

Positions 1–117 (MESSVKASVD…RKLQPQDALE (117 aa)) are disordered. Phosphoserine occurs at positions 11, 15, 16, and 58. Composition is skewed to polar residues over residues 14-29 (ESSPGVNETAAASGQR) and 49-58 (EQNSSYVQDS). Positions 65 to 93 (LDVEIILDEKHSEDDGGASKRSKLERGGG) are enriched in basic and acidic residues. 2 positions are modified to phosphoserine: Ser-94 and Ser-99. Positions 107-109 (KRK) match the Nuclear localization signal motif. Positions 152–460 (SRIFYLRNFN…IYLVFAFEKQ (309 aa)) constitute an mRNA cap 0 methyltransferase domain. Residue 161–162 (NN) participates in mRNA binding. The S-adenosyl-L-methionine site is built by Lys-165, Gly-190, Asp-212, Asp-246, Gln-269, and Tyr-274.

The protein belongs to the class I-like SAM-binding methyltransferase superfamily. mRNA cap 0 methyltransferase family. In terms of assembly, interacts with importin alpha, leading to stimulate both RNA-binding and methyltransferase activity. Interaction with importin alpha and beta is required for its nuclear localization, importin beta dissociating in response to RanGTP, allowing RNMT-importin alpha to bind RNA substrates. Interacts with elongating form of polymerase II and RNGTT. Interacts with RAMAC, this interaction significantly enhances RNA-binding and cap methyltransferase activity.

It localises to the nucleus. The enzyme catalyses a 5'-end (5'-triphosphoguanosine)-ribonucleoside in mRNA + S-adenosyl-L-methionine = a 5'-end (N(7)-methyl 5'-triphosphoguanosine)-ribonucleoside in mRNA + S-adenosyl-L-homocysteine. Its activity is regulated as follows. Methyltransferase activity is activated by RAMAC. Catalytic subunit of the mRNA-capping methyltransferase RNMT:RAMAC complex that methylates the N7 position of the added guanosine to the 5'-cap structure of mRNAs. Binds RNA containing 5'-terminal GpppC. This Rattus norvegicus (Rat) protein is mRNA cap guanine-N(7) methyltransferase (Rnmt).